The sequence spans 98 residues: NADH-ubiquinone oxidoreductase chain 4L (98 aa).

The next 3 helical transmembrane spans lie at 2–22, 29–49, and 61–81; these read PPIFTNVILAFATAFLGTLIF, SLLCLEGMMLSLFILSTLIIL, and ILLLVFAACEAAIGLALLVMV.

Belongs to the complex I subunit 4L family. In terms of assembly, core subunit of respiratory chain NADH dehydrogenase (Complex I) which is composed of 45 different subunits.

It is found in the mitochondrion inner membrane. It catalyses the reaction a ubiquinone + NADH + 5 H(+)(in) = a ubiquinol + NAD(+) + 4 H(+)(out). Its function is as follows. Core subunit of the mitochondrial membrane respiratory chain NADH dehydrogenase (Complex I) which catalyzes electron transfer from NADH through the respiratory chain, using ubiquinone as an electron acceptor. Part of the enzyme membrane arm which is embedded in the lipid bilayer and involved in proton translocation. The chain is NADH-ubiquinone oxidoreductase chain 4L (MT-ND4L) from Avahi occidentalis (Western woolly lemur).